We begin with the raw amino-acid sequence, 431 residues long: Tol-Pal system protein TolB (431 aa).

The N-terminal stretch at 1–26 (MRLMTKLGFRALVASCLIAAGAAANA) is a signal peptide. The tract at residues 411-431 (PQILSVQGGSVREPSWGPFMQ) is disordered.

This sequence belongs to the TolB family. As to quaternary structure, the Tol-Pal system is composed of five core proteins: the inner membrane proteins TolA, TolQ and TolR, the periplasmic protein TolB and the outer membrane protein Pal. They form a network linking the inner and outer membranes and the peptidoglycan layer.

The protein localises to the periplasm. Functionally, part of the Tol-Pal system, which plays a role in outer membrane invagination during cell division and is important for maintaining outer membrane integrity. In Burkholderia ambifaria (strain ATCC BAA-244 / DSM 16087 / CCUG 44356 / LMG 19182 / AMMD) (Burkholderia cepacia (strain AMMD)), this protein is Tol-Pal system protein TolB.